A 108-amino-acid chain; its full sequence is Con-Ins K1 (108 aa).

Positions 1–24 are cleaved as a signal peptide; it reads MTTSSYFLLVALGLLLYVCQSSFG. Residues 25–28 constitute a propeptide that is removed on maturation; the sequence is SPHT. Cystine bridges form between Cys41–Cys90, Cys53–Cys103, and Cys89–Cys94. Glu44 is modified (4-carboxyglutamate). Positions 57–83 are cleaved as a propeptide — c peptide; that stretch reads RKRRGFPSMLKARAKRNEAFLLQRDGR. Glu87 carries the 4-carboxyglutamate modification. At Gln107 the chain carries Glutamine amide.

This sequence belongs to the insulin family. As to quaternary structure, heterodimer of A and B chains; disulfide-linked. Expressed by the venom gland.

It localises to the secreted. In terms of biological role, this venom insulin, from a fish-hunting cone snail, facilitates prey capture by rapidly inducing hypoglycemic shock. It is one of the smallest known insulin found in nature and lacks the C-terminal segment of the B chain that, in human insulin, mediates engagement of the insulin receptor (INSR) and assembly of the hormone's hexameric storage form. Despite lacking this segment, it both binds and activates human insulin receptor (long isoform (HIR-B)) with a moderate potency (EC(50)=30.45 nM). In vivo, intraperitoneal injection of this peptide into zebrafish lowers blood glucose with a lower potency than human insulin. In addition, when applied to water, this peptide reduces overall locomotor activity of zebrafish larvae, observed as a significant decrease in the percentage of time spent swimming and movement frequency. When tested on a mouse model of diabetes, this insulin also lowers blood glucose with a 20-fold lower potency than human insulin. This Conus kinoshitai (Kinoshita's cone) protein is Con-Ins K1.